The primary structure comprises 394 residues: Subtilisin-like protease 4 (394 aa).

The N-terminal stretch at Cys-1–Ala-17 is a signal peptide. A propeptide spanning residues Arg-18 to Ser-116 is cleaved from the precursor. The 80-residue stretch at Tyr-36–Ile-115 folds into the Inhibitor I9 domain. Asn-100 carries N-linked (GlcNAc...) asparagine glycosylation. Positions Ser-126–Gly-394 constitute a Peptidase S8 domain. Residues Asp-158 and His-189 each act as charge relay system in the active site. 2 N-linked (GlcNAc...) asparagine glycosylation sites follow: Asn-250 and Asn-306. Catalysis depends on Ser-344, which acts as the Charge relay system.

It belongs to the peptidase S8 family.

The protein localises to the secreted. Its function is as follows. Secreted subtilisin-like serine protease with keratinolytic activity that contributes to pathogenicity. The polypeptide is Subtilisin-like protease 4 (SUB4) (Trichophyton equinum (Horse ringworm fungus)).